We begin with the raw amino-acid sequence, 399 residues long: Succinyl-diaminopimelate desuccinylase (399 aa).

A Zn(2+)-binding site is contributed by His80. Residue Asp82 is part of the active site. Zn(2+) is bound at residue Asp113. Glu147 (proton acceptor) is an active-site residue. The Zn(2+) site is built by Glu148, Glu176, and His366.

The protein belongs to the peptidase M20A family. DapE subfamily. Homodimer. Requires Zn(2+) as cofactor. The cofactor is Co(2+).

It catalyses the reaction N-succinyl-(2S,6S)-2,6-diaminopimelate + H2O = (2S,6S)-2,6-diaminopimelate + succinate. The protein operates within amino-acid biosynthesis; L-lysine biosynthesis via DAP pathway; LL-2,6-diaminopimelate from (S)-tetrahydrodipicolinate (succinylase route): step 3/3. Catalyzes the hydrolysis of N-succinyl-L,L-diaminopimelic acid (SDAP), forming succinate and LL-2,6-diaminopimelate (DAP), an intermediate involved in the bacterial biosynthesis of lysine and meso-diaminopimelic acid, an essential component of bacterial cell walls. The protein is Succinyl-diaminopimelate desuccinylase of Colwellia psychrerythraea (strain 34H / ATCC BAA-681) (Vibrio psychroerythus).